Consider the following 197-residue polypeptide: Protein Hikeshi (197 aa).

Residues 18 to 55 form a required for F-X-F-G repeats-nucleoporins recognition and nuclear import region; that stretch reads VAEDKFVFDLPDYESINHVVVFMLGTIPFPEGMGGSVY. Residues 124–134 are flexible linker region involved in nuclear import of HSP70 proteins; it reads QTPVGNAAVSS.

This sequence belongs to the OPI10 family. In terms of assembly, forms an asymmetric homodimer; required for binding and nuclear import of HSP70 proteins. Interacts with ATP-bound HSP70 proteins. Interacts with NUP62 and NUP153 (via F-X-F-G repeats). Interacts with HSPA8.

It is found in the cytoplasm. The protein localises to the cytosol. Its subcellular location is the nucleus. Acts as a specific nuclear import carrier for HSP70 proteins following heat-shock stress: acts by mediating the nucleoporin-dependent translocation of ATP-bound HSP70 proteins into the nucleus. HSP70 proteins import is required to protect cells from heat shock damages. Does not translocate ADP-bound HSP70 proteins into the nucleus. The protein is Protein Hikeshi of Homo sapiens (Human).